The sequence spans 311 residues: Protoheme IX farnesyltransferase (311 aa).

The next 9 helical transmembrane spans lie at 38–58 (IKVV…APDM), 62–82 (YFVQ…AAVI), 113–133 (LIFS…AANW), 134–154 (LTAQ…TMFL), 162–182 (IVIG…SETG), 188–208 (PWIL…ALAI), 230–250 (FTKT…FLPF), 251–271 (LIHM…IIFI), and 286–306 (ALNL…ALFA).

It belongs to the UbiA prenyltransferase family. Protoheme IX farnesyltransferase subfamily.

Its subcellular location is the cell inner membrane. The catalysed reaction is heme b + (2E,6E)-farnesyl diphosphate + H2O = Fe(II)-heme o + diphosphate. The protein operates within porphyrin-containing compound metabolism; heme O biosynthesis; heme O from protoheme: step 1/1. Converts heme B (protoheme IX) to heme O by substitution of the vinyl group on carbon 2 of heme B porphyrin ring with a hydroxyethyl farnesyl side group. The sequence is that of Protoheme IX farnesyltransferase from Psychromonas ingrahamii (strain DSM 17664 / CCUG 51855 / 37).